Here is a 1361-residue protein sequence, read N- to C-terminus: Cell migration-inducing and hyaluronan-binding protein (1361 aa).

The first 30 residues, 1–30 (MGAAGRQDFLFKAMLTISWLTLTCFPGATS), serve as a signal peptide directing secretion. A G8 domain is found at 44 to 166 (QPWNPGHDQD…KKLSWTFLNK (123 aa)). 5 N-linked (GlcNAc...) asparagine glycosylation sites follow: Asn-119, Asn-165, Asn-312, Asn-370, and Asn-420. The GG-type lectin 1 domain maps to 176-317 (GGYFFERSWG…GEYFNVSLSS (142 aa)). The necessary for its endoplasmic reticulum (ER) retention and interaction with HSPA5 stretch occupies residues 295-591 (AAARVFKLFQ…IHHTFSRCVT (297 aa)). 4 PbH1 repeats span residues 572-594 (DPPTYIRDLSIHHTFSRCVTVHG), 595-617 (SNGLLIKDVVGYNSLGHCFFTED), 719-741 (IPLGKFYNNRAHSNYRAGMIIDN), and 798-819 (GGDVWLDSCRFADNGIGLTLAS). Asn-889 and Asn-921 each carry an N-linked (GlcNAc...) asparagine glycan. A GG-type lectin 2 domain is found at 1227–1361 (NDFAYIEVDG…PIPVVKKKKL (135 aa)).

This sequence belongs to the CEMIP family. Interacts with EPHA2 and ITPR3. Interacts with HSPA5/BIP; the interaction induces calcium leakage from the endoplasmic reticulum and cell migration. Interacts with clathrin heavy chain/CLTC. In terms of processing, N-glycosylated; glycosylation is not necessary for HA-binding. As to expression, expressed in dermal and in synovial fibroblasts. Strongly expressed in gastric cancers compared with the paired normal tissues. Strongly expressed in both ductal carcinoma and invasive breast cancer cells compared with benign epithelial cells (at protein level). Strongly expressed in brain, placenta, prostate, breast, lung and testis. Expressed in fibroblasts, epithelial cells and cancer cells. In ear, it is specifically expressed in inner ear. Expressed in cochlea and vestibule tissues. Strongly expressed in gastric cancers compared with the paired normal tissues. Strongly expressed in colon adenocarcinomas compared with normal colonic mucosas. Strongly expressed in breast cancer as compared to normal breast tissue.

It localises to the nucleus. Its subcellular location is the cytoplasm. It is found in the endoplasmic reticulum. The protein resides in the cell membrane. The protein localises to the membrane. It localises to the clathrin-coated pit. Its subcellular location is the secreted. The enzyme catalyses Random hydrolysis of (1-&gt;4)-linkages between N-acetyl-beta-D-glucosamine and D-glucuronate residues in hyaluronate.. With respect to regulation, activity is up-regulated by histamine. Functionally, mediates depolymerization of hyaluronic acid (HA) via the cell membrane-associated clathrin-coated pit endocytic pathway. Binds to hyaluronic acid. Hydrolyzes high molecular weight hyaluronic acid to produce an intermediate-sized product, a process that may occur through rapid vesicle endocytosis and recycling without intracytoplasmic accumulation or digestion in lysosomes. Involved in hyaluronan catabolism in the dermis of the skin and arthritic synovium. Positively regulates epithelial-mesenchymal transition (EMT), and hence tumor cell growth, invasion and cancer dissemination. In collaboration with HSPA5/BIP, promotes cancer cell migration in a calcium and PKC-dependent manner. May be involved in hearing. This Homo sapiens (Human) protein is Cell migration-inducing and hyaluronan-binding protein.